Reading from the N-terminus, the 215-residue chain is Large ribosomal subunit protein uL3 (215 aa).

Over residues 131 to 144 (SSSRASHGNSRSHN) the composition is skewed to low complexity. Positions 131-150 (SSSRASHGNSRSHNVPGSIG) are disordered. At Q153 the chain carries N5-methylglutamine.

The protein belongs to the universal ribosomal protein uL3 family. Part of the 50S ribosomal subunit. Forms a cluster with proteins L14 and L19. In terms of processing, methylated by PrmB.

In terms of biological role, one of the primary rRNA binding proteins, it binds directly near the 3'-end of the 23S rRNA, where it nucleates assembly of the 50S subunit. In Nitrosomonas europaea (strain ATCC 19718 / CIP 103999 / KCTC 2705 / NBRC 14298), this protein is Large ribosomal subunit protein uL3.